A 597-amino-acid chain; its full sequence is Elongation factor 4 (597 aa).

The tr-type G domain occupies 2–184; that stretch reads KNIRNFSIIA…TVVQKIPAPK (183 aa). GTP-binding positions include 14–19 and 131–134; these read DHGKST and NKID.

Belongs to the TRAFAC class translation factor GTPase superfamily. Classic translation factor GTPase family. LepA subfamily.

The protein resides in the cell inner membrane. It carries out the reaction GTP + H2O = GDP + phosphate + H(+). Required for accurate and efficient protein synthesis under certain stress conditions. May act as a fidelity factor of the translation reaction, by catalyzing a one-codon backward translocation of tRNAs on improperly translocated ribosomes. Back-translocation proceeds from a post-translocation (POST) complex to a pre-translocation (PRE) complex, thus giving elongation factor G a second chance to translocate the tRNAs correctly. Binds to ribosomes in a GTP-dependent manner. This chain is Elongation factor 4, found in Laribacter hongkongensis (strain HLHK9).